Consider the following 661-residue polypeptide: Galactan 5-O-arabinofuranosyltransferase (661 aa).

Helical transmembrane passes span Leu26–Gly46, Val64–Leu84, Ala108–Ile128, Ala194–Trp214, Ile217–Ala237, Pro243–Ala263, Gly265–Thr285, Leu286–Val306, Pro312–Gly332, Val362–Val382, Met393–Leu413, Leu418–Ile438, and Thr458–Ala478.

Belongs to the glycosyltransferase 85 family.

The protein resides in the cell membrane. It carries out the reaction Adds an alpha-D-arabinofuranosyl group from trans,octacis-decaprenylphospho-beta-D-arabinofuranose at the 5-O-position of the eighth, tenth and twelfth galactofuranose unit of the galactofuranan chain of [beta-D-galactofuranosyl-(1-&gt;5)-beta-D-galactofuranosyl-(1-&gt;6)]14-beta-D-galactofuranosyl-(1-&gt;5)-beta-D-galactofuranosyl-(1-&gt;4)-alpha-L-rhamnopyranosyl-(1-&gt;3)-N-acetyl-alpha-D-glucosaminyl-diphospho-trans,octacis-decaprenol.. It participates in cell wall biogenesis; cell wall polysaccharide biosynthesis. Involved in the biosynthesis of the arabinogalactan (AG) region of the mycolylarabinogalactan-peptidoglycan (mAGP) complex, an essential component of the cell wall. Catalyzes the addition of the first key arabinofuranosyl (Araf) residue from the sugar donor decaprenyl-phospho-arabinose (DPA) on the C-5 of a 6-linked galactofuranosyl (Galf) of the galactan domain, thus 'priming' the galactan for further elaboration by other arabinofuranosyltransferases. The polypeptide is Galactan 5-O-arabinofuranosyltransferase (Corynebacterium glutamicum (strain ATCC 13032 / DSM 20300 / JCM 1318 / BCRC 11384 / CCUG 27702 / LMG 3730 / NBRC 12168 / NCIMB 10025 / NRRL B-2784 / 534)).